A 473-amino-acid chain; its full sequence is ATP-dependent 6-phosphofructokinase 1 (473 aa).

The residue at position 71 (Ser-71) is a Phosphoserine. ATP is bound by residues Gly-102, 165–166 (RG), and 190–193 (GDGS). Asp-191 is a binding site for Mg(2+). Residues 219–221 (TID), 264–266 (MGR), Glu-320, and 376–379 (YMIR) contribute to the substrate site. Asp-221 serves as the catalytic Proton acceptor.

The protein belongs to the phosphofructokinase type A (PFKA) family. PPi-dependent PFK group II subfamily. Atypical ATP-dependent clade 'X' sub-subfamily. Homotetramer. It depends on Mg(2+) as a cofactor. As to expression, expressed in roots, leaves, stems and flowers.

It is found in the cytoplasm. It carries out the reaction beta-D-fructose 6-phosphate + ATP = beta-D-fructose 1,6-bisphosphate + ADP + H(+). The protein operates within carbohydrate degradation; glycolysis; D-glyceraldehyde 3-phosphate and glycerone phosphate from D-glucose: step 3/4. Its activity is regulated as follows. Allosterically activated by AMP. Its function is as follows. Catalyzes the phosphorylation of D-fructose 6-phosphate to fructose 1,6-bisphosphate by ATP, the first committing step of glycolysis. The chain is ATP-dependent 6-phosphofructokinase 1 from Arabidopsis thaliana (Mouse-ear cress).